The chain runs to 363 residues: UDP-N-acetylglucosamine--N-acetylmuramyl-(pentapeptide) pyrophosphoryl-undecaprenol N-acetylglucosamine transferase (363 aa).

Residues 14–16 (TGG), N122, R163, S190, and Q285 each bind UDP-N-acetyl-alpha-D-glucosamine.

This sequence belongs to the glycosyltransferase 28 family. MurG subfamily.

It localises to the cell inner membrane. The enzyme catalyses di-trans,octa-cis-undecaprenyl diphospho-N-acetyl-alpha-D-muramoyl-L-alanyl-D-glutamyl-meso-2,6-diaminopimeloyl-D-alanyl-D-alanine + UDP-N-acetyl-alpha-D-glucosamine = di-trans,octa-cis-undecaprenyl diphospho-[N-acetyl-alpha-D-glucosaminyl-(1-&gt;4)]-N-acetyl-alpha-D-muramoyl-L-alanyl-D-glutamyl-meso-2,6-diaminopimeloyl-D-alanyl-D-alanine + UDP + H(+). Its pathway is cell wall biogenesis; peptidoglycan biosynthesis. Its function is as follows. Cell wall formation. Catalyzes the transfer of a GlcNAc subunit on undecaprenyl-pyrophosphoryl-MurNAc-pentapeptide (lipid intermediate I) to form undecaprenyl-pyrophosphoryl-MurNAc-(pentapeptide)GlcNAc (lipid intermediate II). In Prochlorococcus marinus (strain MIT 9312), this protein is UDP-N-acetylglucosamine--N-acetylmuramyl-(pentapeptide) pyrophosphoryl-undecaprenol N-acetylglucosamine transferase.